Consider the following 182-residue polypeptide: Plasmolipin (182 aa).

Topologically, residues 1–35 (MAEFPSKVSTRTSSPAQGVGASVSALRPDLGFVRS) are cytoplasmic. Ser-9 is subject to Phosphoserine. In terms of domain architecture, MARVEL spans 32-166 (FVRSALGVLA…SAFFSFQAWR (135 aa)). Residues 36–56 (ALGVLALLQLALGLLVWALIA) traverse the membrane as a helical segment. Over 57 to 68 (DTPYHLYPAYGW) the chain is Extracellular. Residues 69–89 (VMFVAVFLWLVTIVFFIIYLF) form a helical membrane-spanning segment. Residues 90–99 (QLHMKLYMVP) are Cytoplasmic-facing. Residues 100–120 (WPLVLLIFFVAATVLYITAFI) form a helical membrane-spanning segment. Over 121-141 (ACAAAVDLTSLRGSRPYNQRS) the chain is Extracellular. Residues 142 to 162 (AASFFACLVMIAYGVSAFFSF) traverse the membrane as a helical segment. The Cytoplasmic portion of the chain corresponds to 163 to 182 (QAWRGVGSNAATSQMAGGYS).

This sequence belongs to the MAL family. Forms oligomers. Phosphorylated.

It localises to the membrane. The protein localises to the cell membrane. Its subcellular location is the myelin membrane. The protein resides in the apical cell membrane. Main component of the myelin sheath that plays an important role in myelin membrane biogenesis and myelination. Plays an essential function in apical endocytosis. Regulates epithelial development through the regulation of apical endocytosis. Part of the intracellular machinery that mediates basolateral-to-apical transport of ICAM-1, an essential adhesion receptor in epithelial cells, from the subapical compartment in hepatic epithelial cells. This Mus musculus (Mouse) protein is Plasmolipin (Pllp).